Consider the following 416-residue polypeptide: N-acetyl-L-cysteine deacetylase (416 aa).

Zn(2+)-binding residues include Cys128, His130, Glu164, His188, and His380.

The protein belongs to the peptidase M20 family. It depends on Zn(2+) as a cofactor. Co(2+) is required as a cofactor.

It catalyses the reaction N-acetyl-L-cysteine + H2O = L-cysteine + acetate. The protein operates within amino-acid metabolism. In terms of biological role, involved in a cysteine salvage pathway from S-alkylcysteine. Catalyzes the last step in this pathway, i.e. the deacetylation of N-acetyl-L-cysteine. This pathway is likely important in the catabolism of alkylated cysteine generated by proteolysis of alkylated glutathione formed in the detoxification of a wide range of electrophiles. This chain is N-acetyl-L-cysteine deacetylase, found in Bacillus subtilis (strain 168).